Reading from the N-terminus, the 333-residue chain is Ketol-acid reductoisomerase (NADP(+)) (333 aa).

The KARI N-terminal Rossmann domain maps to 1–171 (MSNDTQPKIA…GGARANIIKT (171 aa)). NADP(+) contacts are provided by residues 14–17 (YGSQ), arginine 37, threonine 42, and 72–75 (DMVQ). Histidine 97 is an active-site residue. Glycine 123 lines the NADP(+) pocket. A KARI C-terminal knotted domain is found at 172–317 (TFKEETETDL…KKLRAKMVWL (146 aa)). Residues aspartate 180, glutamate 184, glutamate 216, and glutamate 220 each contribute to the Mg(2+) site. Position 241 (serine 241) interacts with substrate.

The protein belongs to the ketol-acid reductoisomerase family. Requires Mg(2+) as cofactor.

It catalyses the reaction (2R)-2,3-dihydroxy-3-methylbutanoate + NADP(+) = (2S)-2-acetolactate + NADPH + H(+). The catalysed reaction is (2R,3R)-2,3-dihydroxy-3-methylpentanoate + NADP(+) = (S)-2-ethyl-2-hydroxy-3-oxobutanoate + NADPH + H(+). It functions in the pathway amino-acid biosynthesis; L-isoleucine biosynthesis; L-isoleucine from 2-oxobutanoate: step 2/4. Its pathway is amino-acid biosynthesis; L-valine biosynthesis; L-valine from pyruvate: step 2/4. In terms of biological role, involved in the biosynthesis of branched-chain amino acids (BCAA). Catalyzes an alkyl-migration followed by a ketol-acid reduction of (S)-2-acetolactate (S2AL) to yield (R)-2,3-dihydroxy-isovalerate. In the isomerase reaction, S2AL is rearranged via a Mg-dependent methyl migration to produce 3-hydroxy-3-methyl-2-ketobutyrate (HMKB). In the reductase reaction, this 2-ketoacid undergoes a metal-dependent reduction by NADPH to yield (R)-2,3-dihydroxy-isovalerate. This chain is Ketol-acid reductoisomerase (NADP(+)), found in Xanthomonas oryzae pv. oryzae (strain MAFF 311018).